The sequence spans 106 residues: Large ribosomal subunit protein eL42 (106 aa).

Residues 36–56 form a disordered region; the sequence is FAQGKRRYDRKQSGYGGQTKP.

Belongs to the eukaryotic ribosomal protein eL42 family.

This is Large ribosomal subunit protein eL42 (RPL44) from Coprinopsis cinerea (strain Okayama-7 / 130 / ATCC MYA-4618 / FGSC 9003) (Inky cap fungus).